A 33-amino-acid polypeptide reads, in one-letter code: Brevinin-2Ea (33 aa).

Cysteines 27 and 33 form a disulfide.

This sequence belongs to the frog skin active peptide (FSAP) family. Brevinin subfamily. Expressed by the skin glands.

It localises to the secreted. Its function is as follows. Shows antibacterial activity against representative Gram-negative and Gram-positive bacterial species, and hemolytic activity. The chain is Brevinin-2Ea from Pelophylax lessonae (Pool frog).